The following is a 108-amino-acid chain: Nucleoid-associated protein PSPTO_3645 (108 aa).

The span at 85-96 shows a compositional bias: polar residues; it reads QASQDKTASMTA. The segment at 85-108 is disordered; the sequence is QASQDKTASMTAGMQLPPGMKLPF.

The protein belongs to the YbaB/EbfC family. In terms of assembly, homodimer.

It localises to the cytoplasm. Its subcellular location is the nucleoid. Its function is as follows. Binds to DNA and alters its conformation. May be involved in regulation of gene expression, nucleoid organization and DNA protection. The polypeptide is Nucleoid-associated protein PSPTO_3645 (Pseudomonas syringae pv. tomato (strain ATCC BAA-871 / DC3000)).